The chain runs to 247 residues: Probable transcriptional regulatory protein PMT_1423 (247 aa).

It belongs to the TACO1 family.

The protein resides in the cytoplasm. This is Probable transcriptional regulatory protein PMT_1423 from Prochlorococcus marinus (strain MIT 9313).